The primary structure comprises 588 residues: uncharacterized protein (588 aa).

A signal peptide spans 1-19 (MRSTAYLTALLSFLGATHA). 2 N-linked (GlcNAc...) asparagine glycosylation sites follow: N45 and N104. The FAD-binding PCMH-type domain occupies 118 to 303 (GQGRIPLYSA…TSVTLRTFKD (186 aa)). At H156 the chain carries Pros-8alpha-FAD histidine. N-linked (GlcNAc...) asparagine glycosylation is found at N179, N312, N320, N351, N370, and N446.

This sequence belongs to the oxygen-dependent FAD-linked oxidoreductase family. The cofactor is FAD.

It is found in the secreted. This is an uncharacterized protein from Arthroderma benhamiae (strain ATCC MYA-4681 / CBS 112371) (Trichophyton mentagrophytes).